The chain runs to 141 residues: ATP synthase epsilon chain (141 aa).

Belongs to the ATPase epsilon chain family. In terms of assembly, F-type ATPases have 2 components, CF(1) - the catalytic core - and CF(0) - the membrane proton channel. CF(1) has five subunits: alpha(3), beta(3), gamma(1), delta(1), epsilon(1). CF(0) has three main subunits: a, b and c.

The protein resides in the cell inner membrane. In terms of biological role, produces ATP from ADP in the presence of a proton gradient across the membrane. The polypeptide is ATP synthase epsilon chain (Pseudomonas syringae pv. syringae (strain B728a)).